Reading from the N-terminus, the 406-residue chain is Tyrosine--tRNA ligase (406 aa).

The short motif at 51 to 60 (PTAPDLHLGH) is the 'HIGH' region element. The 'KMSKS' region signature appears at 236–240 (KMSKS). Lys-239 serves as a coordination point for ATP. Residues 345–405 (IWICKAMVEG…GKRKFLRLIV (61 aa)) enclose the S4 RNA-binding domain.

This sequence belongs to the class-I aminoacyl-tRNA synthetase family. TyrS type 2 subfamily. Homodimer.

The protein resides in the cytoplasm. The catalysed reaction is tRNA(Tyr) + L-tyrosine + ATP = L-tyrosyl-tRNA(Tyr) + AMP + diphosphate + H(+). Functionally, catalyzes the attachment of tyrosine to tRNA(Tyr) in a two-step reaction: tyrosine is first activated by ATP to form Tyr-AMP and then transferred to the acceptor end of tRNA(Tyr). The protein is Tyrosine--tRNA ligase of Wolinella succinogenes (strain ATCC 29543 / DSM 1740 / CCUG 13145 / JCM 31913 / LMG 7466 / NCTC 11488 / FDC 602W) (Vibrio succinogenes).